Consider the following 392-residue polypeptide: p21-activated protein kinase-interacting protein 1 (392 aa).

WD repeat units follow at residues 40–77, 80–118, 121–160, 202–240, and 243–284; these read AHTASLSAVAVNSRFVVTGSKDETIHIYDMKKKVDHGA, HHNGTITCLKFHGNRHLISGAEDGLICVWDARRWECLKS, AHKGHVTFLSIHPSGRLALSVGTDKTLRTWNLVEGRSAFI, TNERRVSSVTFLSESVLTVAGDEEVVRFFDCDSLTCLSE, and AHEN…KVSP. Residues 309 to 392 form a disordered region; that stretch reads TKESPPAAAE…RKKKKIRMMQ (84 aa). Positions 325 to 351 are enriched in basic and acidic residues; sequence EQSRRNKEESGHAVQEEEKQPKPDTEK. Residues 355–368 are compositionally biased toward polar residues; it reads TGDSNKPTRGNSLV. The span at 381–392 shows a compositional bias: basic residues; that stretch reads KKRKKKKIRMMQ.

As to quaternary structure, interacts with PAK1.

The protein resides in the nucleus. The protein localises to the nucleolus. In terms of biological role, negatively regulates the PAK1 kinase. PAK1 is a member of the PAK kinase family, which has been shown to play a positive role in the regulation of signaling pathways involving MAPK8 and RELA. PAK1 exists as an inactive homodimer, which is activated by binding of small GTPases such as CDC42 to an N-terminal regulatory domain. PAK1IP1 also binds to the N-terminus of PAK1, and inhibits the specific activation of PAK1 by CDC42. May be involved in ribosomal large subunit assembly. The protein is p21-activated protein kinase-interacting protein 1 (PAK1IP1) of Bos taurus (Bovine).